The primary structure comprises 382 residues: uncharacterized protein (382 aa).

12 helical membrane-spanning segments follow: residues 8 to 28 (VLLL…LNTL), 41 to 61 (WQVG…TLIA), 73 to 93 (SYHY…LSVD), 94 to 114 (FWSW…IWVI), 133 to 153 (AAYM…LGVV), 157 to 177 (LLSV…PLLF), 208 to 228 (GCII…LYLS), 235 to 255 (ASVG…QWPI), 274 to 294 (VVIL…ALFI), 295 to 315 (LGCA…EKVS), 325 to 345 (ALLM…SLLM), and 349 to 369 (SDNL…MMLL).

Belongs to the major facilitator superfamily. YcaD (TC 2.A.1.26) family.

It localises to the cell inner membrane. This is an uncharacterized protein from Yersinia enterocolitica serotype O:8 / biotype 1B (strain NCTC 13174 / 8081).